Here is a 590-residue protein sequence, read N- to C-terminus: Proline--tRNA ligase (590 aa).

The protein belongs to the class-II aminoacyl-tRNA synthetase family. ProS type 1 subfamily. As to quaternary structure, homodimer.

The protein localises to the cytoplasm. The enzyme catalyses tRNA(Pro) + L-proline + ATP = L-prolyl-tRNA(Pro) + AMP + diphosphate. Catalyzes the attachment of proline to tRNA(Pro) in a two-step reaction: proline is first activated by ATP to form Pro-AMP and then transferred to the acceptor end of tRNA(Pro). As ProRS can inadvertently accommodate and process non-cognate amino acids such as alanine and cysteine, to avoid such errors it has two additional distinct editing activities against alanine. One activity is designated as 'pretransfer' editing and involves the tRNA(Pro)-independent hydrolysis of activated Ala-AMP. The other activity is designated 'posttransfer' editing and involves deacylation of mischarged Ala-tRNA(Pro). The misacylated Cys-tRNA(Pro) is not edited by ProRS. In Clavibacter sepedonicus (Clavibacter michiganensis subsp. sepedonicus), this protein is Proline--tRNA ligase.